The chain runs to 456 residues: Adenylyltransferase and sulfurtransferase uba4 (456 aa).

Residues Gly-101, Asp-122, Ser-129–Arg-133, Lys-146, and Asp-161–His-162 each bind ATP. Positions 210 and 213 each coordinate Zn(2+). Cys-227 functions as the Glycyl thioester intermediate; for adenylyltransferase activity in the catalytic mechanism. Zn(2+) contacts are provided by Cys-300 and Cys-303. The region spanning Lys-350–Pro-454 is the Rhodanese domain. Cys-409 functions as the Cysteine persulfide intermediate; for sulfurtransferase activity in the catalytic mechanism.

It in the N-terminal section; belongs to the HesA/MoeB/ThiF family. UBA4 subfamily. Zn(2+) serves as cofactor.

It is found in the cytoplasm. Its subcellular location is the cytosol. It carries out the reaction [molybdopterin-synthase sulfur-carrier protein]-C-terminal Gly-Gly + ATP + H(+) = [molybdopterin-synthase sulfur-carrier protein]-C-terminal Gly-Gly-AMP + diphosphate. The enzyme catalyses [molybdopterin-synthase sulfur-carrier protein]-C-terminal Gly-Gly-AMP + S-sulfanyl-L-cysteinyl-[cysteine desulfurase] + AH2 = [molybdopterin-synthase sulfur-carrier protein]-C-terminal-Gly-aminoethanethioate + L-cysteinyl-[cysteine desulfurase] + A + AMP + 2 H(+). It functions in the pathway tRNA modification; 5-methoxycarbonylmethyl-2-thiouridine-tRNA biosynthesis. Plays a central role in 2-thiolation of mcm(5)S(2)U at tRNA wobble positions of cytosolic tRNA(Lys), tRNA(Glu) and tRNA(Gln). Also essential during biosynthesis of the molybdenum cofactor. Acts by mediating the C-terminal thiocarboxylation of sulfur carriers urm1 and mocs2a. Its N-terminus first activates urm1 and mocs2a as acyl-adenylates (-COAMP), then the persulfide sulfur on the catalytic cysteine is transferred to urm1 and mocs2a to form thiocarboxylation (-COSH) of their C-terminus. The reaction probably involves hydrogen sulfide that is generated from the persulfide intermediate and that acts as a nucleophile towards urm1 and mocs2a. Subsequently, a transient disulfide bond is formed. Does not use thiosulfate as sulfur donor; nfs1 probably acting as a sulfur donor for thiocarboxylation reactions. The chain is Adenylyltransferase and sulfurtransferase uba4 from Sclerotinia sclerotiorum (strain ATCC 18683 / 1980 / Ss-1) (White mold).